The following is a 936-amino-acid chain: Probable outer membrane protein pmp7 (936 aa).

The N-terminal stretch at 1–23 (MKSSVSWLFFSSIPLFSSLSIVA) is a signal peptide. An Autotransporter domain is found at 636 to 936 (GEPFERELWL…NTNLGSKFCF (301 aa)).

This sequence belongs to the PMP outer membrane protein family.

Its subcellular location is the secreted. It is found in the cell wall. The protein localises to the cell outer membrane. This chain is Probable outer membrane protein pmp7 (pmp7), found in Chlamydia pneumoniae (Chlamydophila pneumoniae).